The chain runs to 122 residues: Large ribosomal subunit protein bL19c (122 aa).

It belongs to the bacterial ribosomal protein bL19 family.

Its subcellular location is the plastid. It localises to the chloroplast. The polypeptide is Large ribosomal subunit protein bL19c (Gracilaria tenuistipitata var. liui (Red alga)).